The primary structure comprises 492 residues: Trichothecene C-15 hydroxylase (492 aa).

Residues 6-26 (LWPLLALSGGTGLAYLVVVVV) traverse the membrane as a helical segment. Positions 88 to 106 (AMKDVRGHRKSGEPEHGKD) are enriched in basic and acidic residues. Residues 88–116 (AMKDVRGHRKSGEPEHGKDPISVQSNGDN) are disordered. N-linked (GlcNAc...) asparagine glycosylation is found at N124, N198, and N290. Heme is bound at residue C438.

This sequence belongs to the cytochrome P450 family. The cofactor is heme.

Its subcellular location is the membrane. It functions in the pathway sesquiterpene biosynthesis; trichothecene biosynthesis. Its function is as follows. Trichothecene C-15 hydroxylase; part of the core gene cluster that mediates the biosynthesis of trichothecenes, a very large family of chemically related bicyclic sesquiterpene compounds acting as mycotoxins, including T2-toxin. The biosynthesis of trichothecenes begins with the cyclization of farnesyl diphosphate to trichodiene and is catalyzed by the trichodiene synthase TRI5. Trichodiene undergoes a series of oxygenations catalyzed by the cytochrome P450 monooxygenase TRI4. TRI4 controls the addition of four oxygens at C-2, C-3, C-11, and the C-12, C-13-epoxide to form the intermediate isotrichotriol. Isotrichotriol then undergoes a non-enzymatic isomerization and cyclization to form isotrichodermol. During this process, the oxygen at the C-2 position becomes the pyran ring oxygen and the hydroxyl group at C-11 is lost. More complex type A trichothecenes are built by modifying isotrichodermol through a series of paired hydroxylation and acetylation or acylation steps. Isotrichodermol is converted to isotrichodermin by the acetyltransferase TRI101. TRI101 encodes a C-3 transacetylase that acts as a self-protection or resistance factor during biosynthesis and that the presence of a free C-3 hydroxyl group is a key component of Fusarium trichothecene phytotoxicity. A second hydroxyl group is added to C-15 by the trichothecene C-15 hydroxylase TRI11, producing 15-decalonectrin, which is then acetylated by TRI3, producing calonectrin. A third hydroxyl group is added at C-4 by the cytochrome P450 monooxygenase TRI13, converting calonectrin to 3,15-diacetoxyspirpenol, which is subsequently acetylated by the acetyltransferase TRI7. A fourth hydroxyl group is added to C-8 by the cytochrome P450 monooxygenase TRI1, followed by the addition of an isovaleryl moiety by TRI16. Finally, the acetyl group is removed from the C-3 position by the trichothecene C-3 esterase TRI8 to produce T-2 toxin. The chain is Trichothecene C-15 hydroxylase from Fusarium sporotrichioides.